Here is a 564-residue protein sequence, read N- to C-terminus: DNA ligase B (564 aa).

The active-site N6-AMP-lysine intermediate is K130.

It belongs to the NAD-dependent DNA ligase family. LigB subfamily.

It carries out the reaction NAD(+) + (deoxyribonucleotide)n-3'-hydroxyl + 5'-phospho-(deoxyribonucleotide)m = (deoxyribonucleotide)n+m + AMP + beta-nicotinamide D-nucleotide.. In terms of biological role, catalyzes the formation of phosphodiester linkages between 5'-phosphoryl and 3'-hydroxyl groups in double-stranded DNA using NAD as a coenzyme and as the energy source for the reaction. This is DNA ligase B from Klebsiella pneumoniae subsp. pneumoniae (strain ATCC 700721 / MGH 78578).